The primary structure comprises 712 residues: Lactoperoxidase (712 aa).

The first 21 residues, 1-21 (MLVCLHLQVFLASVALFEVAA), serve as a signal peptide directing secretion. A propeptide spanning residues 22 to 117 (SDTIAQAAST…TDPSLDLTAL (96 aa)) is cleaved from the precursor. The N-linked (GlcNAc...) (complex) asparagine; alternate glycan is linked to Asn106. A glycan (N-linked (GlcNAc...) (hybrid) asparagine; alternate) is linked at Asn106. Cystine bridges form between Cys123–Cys284, Cys132–Cys145, Cys246–Cys256, and Cys250–Cys274. Residue Asn212 is glycosylated (N-linked (GlcNAc...) (complex) asparagine; alternate). N-linked (GlcNAc...) (hybrid) asparagine; alternate glycosylation is present at Asn212. Residue Asp225 coordinates heme b. His226 functions as the Proton acceptor in the catalytic mechanism. Asp227 contributes to the Ca(2+) binding site. Residues Thr301, Phe303, Asp305, and Ser307 each coordinate Ca(2+). Ser315 carries the phosphoserine modification. N-linked (GlcNAc...) (high mannose) asparagine glycosylation occurs at Asn322. Cys354 and Cys365 form a disulfide bridge. An N-linked (GlcNAc...) asparagine glycan is attached at Asn358. Glu375 lines the heme b pocket. Asn449 carries an N-linked (GlcNAc...) (complex) asparagine; alternate glycan. N-linked (GlcNAc...) (hybrid) asparagine; alternate glycosylation is present at Asn449. Asn449 carries N-linked (GlcNAc...) (high mannose) asparagine; alternate glycosylation. His468 is a heme b binding site. Tyr482 is subject to 3'-nitrotyrosine. 2 cysteine pairs are disulfide-bonded: Cys573–Cys630 and Cys671–Cys696.

This sequence belongs to the peroxidase family. XPO subfamily. Requires Ca(2+) as cofactor. It depends on heme b as a cofactor. Mammary gland; milk.

Its subcellular location is the secreted. It localises to the cytoplasm. The enzyme catalyses 2 a phenolic donor + H2O2 = 2 a phenolic radical donor + 2 H2O. It carries out the reaction thiocyanate + H2O2 + H(+) = hypothiocyanous acid + H2O. The catalysed reaction is iodide + H2O2 = hypoiodite + H2O. Inhibited by small molecule methimazole (MMZ). Functionally, heme-containing oxidoreductase which catalyzes the conversion of thiocyanate (SCN(-)) into antimicrobial agent hypothiocyanous acid (OSCN(-)) in the presence of hydrogen peroxide (H2O2). Also involved in the conversion of iodide (I(-)) into hypoiodite (IO(-)) in the presence of H2O2. Responsible for the inactivation of a wide range of micro-organisms and hence, important component of defense mechanism. Shows antibacterial properties against several Gram-positive bacteria including some Staphylococcus species and Gram-negative bacteria including E.coli, P.aeruginosa and some Salmonella species. Inhibits the growth of several fungi including A.niger, Trichoderma species, C.cassicola, P.meadii and C.salmonicolor. Does not have anti-fungal activity towards C.albicans and Pythium species. May protect the udder from infection and may promote growth in newborns. May be implicated in airway host defense against infection. May contribute to maintaining an appropriate H2O2 cellular level, therefore protecting cells from H2O2-caused injuries and inflammation. The polypeptide is Lactoperoxidase (LPO) (Capra hircus (Goat)).